The chain runs to 211 residues: MIDSAFVVLPHDLLWGMPLSALPDDAPQWAVDTLLAGQPVVVRRQAMPAGQVAVGLRGRGREQRYAASMWLTNVYRRVTPEQLIDCPSEHIQDWPALRALRQVRPVMDALERVWGVGGSAGFELASGIAALNQDSDLDLILRTPAPFSRRCAAELVEALAASVCRVDVQLQLDQGAVALREWARPAGRVLLKTASGARLVSDPWHLAEVCA.

Active-site residues include Asp-136 and Asp-138.

The protein belongs to the MdcG family.

The catalysed reaction is apo-[malonate decarboxylase ACP] + 2'-(5''-triphospho-alpha-D-ribosyl)-3'-dephospho-CoA = holo-[malonate decarboxylase ACP] + diphosphate. Functionally, transfers 2'-(5-triphosphoribosyl)-3'-dephosphocoenzyme-A to the apo-[acyl-carrier-protein] of the malonate decarboxylase to yield holo-[acyl-carrier-protein]. This chain is Phosphoribosyl-dephospho-CoA transferase, found in Pseudomonas syringae pv. tomato (strain ATCC BAA-871 / DC3000).